The primary structure comprises 234 residues: Probable GTP-binding protein EngB (234 aa).

Positions 23 to 209 (AVPEVAFAGR…QRTVAGWLCL (187 aa)) constitute an EngB-type G domain. Residues 31 to 38 (GRSNAGKS), 58 to 62 (GRTQH), 82 to 85 (DLPG), 149 to 152 (TKAD), and 187 to 190 (LFSS) each bind GTP. Residues Ser-38 and Thr-60 each contribute to the Mg(2+) site. A disordered region spans residues 210–234 (PEAMPPSPDAEPAKKTPSPDAQRGE).

It belongs to the TRAFAC class TrmE-Era-EngA-EngB-Septin-like GTPase superfamily. EngB GTPase family. The cofactor is Mg(2+).

Its function is as follows. Necessary for normal cell division and for the maintenance of normal septation. This is Probable GTP-binding protein EngB from Ralstonia nicotianae (strain ATCC BAA-1114 / GMI1000) (Ralstonia solanacearum).